Consider the following 627-residue polypeptide: Ski protein homolog (627 aa).

Positions 1–12 (MSDSPIGSSQQV) are enriched in polar residues. Disordered stretches follow at residues 1 to 22 (MSDS…PDLM), 34 to 58 (LHEE…KDSR), and 299 to 318 (EYDE…METP).

Belongs to the SKI family. As to quaternary structure, may interact with daf-3. As to expression, expressed in ganglia in the head and tail and in the anterior pharynx.

It is found in the nucleus. In terms of biological role, probable component of transcriptional regulatory complex with SMAD protein daf-3. Required to regulate entry into a developmentally arrested larval state known as dauer, in response to harsh environmental conditions. Involved in larvae undergoing cell-cycle arrest during the dauer stage. This is Ski protein homolog from Caenorhabditis elegans.